The chain runs to 413 residues: Tyrosine--tRNA ligase (413 aa).

The 'HIGH' region motif lies at 59-68 (PTAPDIHIGH). A 'KMSKS' region motif is present at residues 243–247 (KMSKS). An ATP-binding site is contributed by K246. One can recognise an S4 RNA-binding domain in the interval 351–411 (LAIGQLLKQA…GKRRFARVTL (61 aa)).

It belongs to the class-I aminoacyl-tRNA synthetase family. TyrS type 2 subfamily. In terms of assembly, homodimer.

Its subcellular location is the cytoplasm. The enzyme catalyses tRNA(Tyr) + L-tyrosine + ATP = L-tyrosyl-tRNA(Tyr) + AMP + diphosphate + H(+). Functionally, catalyzes the attachment of tyrosine to tRNA(Tyr) in a two-step reaction: tyrosine is first activated by ATP to form Tyr-AMP and then transferred to the acceptor end of tRNA(Tyr). The polypeptide is Tyrosine--tRNA ligase (Burkholderia lata (strain ATCC 17760 / DSM 23089 / LMG 22485 / NCIMB 9086 / R18194 / 383)).